Reading from the N-terminus, the 260-residue chain is Histidine-binding periplasmic protein (260 aa).

Residues 1–22 (MKKLALSLSLVLAFSSATAAFA) form the signal peptide. Residues C60 and C67 are joined by a disulfide bond. Residues S91, S92, S94, R99, T143, and D183 each coordinate L-histidine.

This sequence belongs to the bacterial solute-binding protein 3 family. In terms of assembly, the complex is composed of two ATP-binding proteins (HisP), two transmembrane proteins (HisM and HisQ) and a solute-binding protein (HisJ).

Its subcellular location is the periplasm. In terms of biological role, part of the ABC transporter complex HisPMQJ involved in histidine transport. Binds histidine. Interacts with HisQMP and stimulates ATPase activity of HisP, which results in histidine translocation. May have some additional function(s) in translocation that is independent of the stimulation of ATP hydrolysis. The polypeptide is Histidine-binding periplasmic protein (Salmonella typhimurium (strain LT2 / SGSC1412 / ATCC 700720)).